A 277-amino-acid polypeptide reads, in one-letter code: 3-methyl-2-oxobutanoate hydroxymethyltransferase (277 aa).

Residues Asp-53 and Asp-96 each coordinate Mg(2+). 3-methyl-2-oxobutanoate-binding positions include 53 to 54 (DS), Asp-96, and Lys-126. Glu-128 serves as a coordination point for Mg(2+). The active-site Proton acceptor is the Glu-195.

Belongs to the PanB family. In terms of assembly, homodecamer; pentamer of dimers. The cofactor is Mg(2+).

It localises to the cytoplasm. The catalysed reaction is 3-methyl-2-oxobutanoate + (6R)-5,10-methylene-5,6,7,8-tetrahydrofolate + H2O = 2-dehydropantoate + (6S)-5,6,7,8-tetrahydrofolate. The protein operates within cofactor biosynthesis; (R)-pantothenate biosynthesis; (R)-pantoate from 3-methyl-2-oxobutanoate: step 1/2. Its function is as follows. Catalyzes the reversible reaction in which hydroxymethyl group from 5,10-methylenetetrahydrofolate is transferred onto alpha-ketoisovalerate to form ketopantoate. The chain is 3-methyl-2-oxobutanoate hydroxymethyltransferase from Chlorobaculum parvum (strain DSM 263 / NCIMB 8327) (Chlorobium vibrioforme subsp. thiosulfatophilum).